A 615-amino-acid chain; its full sequence is 1-deoxy-D-xylulose-5-phosphate synthase (615 aa).

Thiamine diphosphate-binding positions include His-72 and 111 to 113 (GHS). Asp-142 is a binding site for Mg(2+). Thiamine diphosphate contacts are provided by residues 143–144 (GA), Asn-171, Tyr-278, and Glu-360. Residue Asn-171 participates in Mg(2+) binding.

This sequence belongs to the transketolase family. DXPS subfamily. As to quaternary structure, homodimer. Mg(2+) serves as cofactor. The cofactor is thiamine diphosphate.

The catalysed reaction is D-glyceraldehyde 3-phosphate + pyruvate + H(+) = 1-deoxy-D-xylulose 5-phosphate + CO2. It participates in metabolic intermediate biosynthesis; 1-deoxy-D-xylulose 5-phosphate biosynthesis; 1-deoxy-D-xylulose 5-phosphate from D-glyceraldehyde 3-phosphate and pyruvate: step 1/1. Catalyzes the acyloin condensation reaction between C atoms 2 and 3 of pyruvate and glyceraldehyde 3-phosphate to yield 1-deoxy-D-xylulose-5-phosphate (DXP). This Campylobacter jejuni subsp. doylei (strain ATCC BAA-1458 / RM4099 / 269.97) protein is 1-deoxy-D-xylulose-5-phosphate synthase.